The chain runs to 139 residues: Small ribosomal subunit protein uS11 (139 aa).

The segment at 1-33 (MPPAKKGPATSARKGQKTRRREKKNVPHGAAHI) is disordered. The span at 14-23 (KGQKTRRREK) shows a compositional bias: basic residues.

Belongs to the universal ribosomal protein uS11 family. Part of the 30S ribosomal subunit. Interacts with proteins S7 and S18. Binds to IF-3.

Its function is as follows. Located on the platform of the 30S subunit, it bridges several disparate RNA helices of the 16S rRNA. Forms part of the Shine-Dalgarno cleft in the 70S ribosome. This Mycobacterium bovis (strain ATCC BAA-935 / AF2122/97) protein is Small ribosomal subunit protein uS11.